A 253-amino-acid polypeptide reads, in one-letter code: DNA repair protein RecO (253 aa).

The protein belongs to the RecO family.

Functionally, involved in DNA repair and RecF pathway recombination. The sequence is that of DNA repair protein RecO from Nitrobacter hamburgensis (strain DSM 10229 / NCIMB 13809 / X14).